The chain runs to 214 residues: Uridine kinase (214 aa).

15-22 (GASASGKS) serves as a coordination point for ATP.

It belongs to the uridine kinase family.

The protein resides in the cytoplasm. It catalyses the reaction uridine + ATP = UMP + ADP + H(+). It carries out the reaction cytidine + ATP = CMP + ADP + H(+). The protein operates within pyrimidine metabolism; CTP biosynthesis via salvage pathway; CTP from cytidine: step 1/3. Its pathway is pyrimidine metabolism; UMP biosynthesis via salvage pathway; UMP from uridine: step 1/1. This Aeromonas salmonicida (strain A449) protein is Uridine kinase.